Here is a 330-residue protein sequence, read N- to C-terminus: Aspartate--ammonia ligase (330 aa).

It belongs to the class-II aminoacyl-tRNA synthetase family. AsnA subfamily.

It is found in the cytoplasm. The enzyme catalyses L-aspartate + NH4(+) + ATP = L-asparagine + AMP + diphosphate + H(+). The protein operates within amino-acid biosynthesis; L-asparagine biosynthesis; L-asparagine from L-aspartate (ammonia route): step 1/1. In Streptococcus pyogenes serotype M3 (strain ATCC BAA-595 / MGAS315), this protein is Aspartate--ammonia ligase.